A 455-amino-acid polypeptide reads, in one-letter code: Bifunctional protein GlmU (455 aa).

The pyrophosphorylase stretch occupies residues 1 to 226; the sequence is MGLSVVILAA…EFEILGVNDR (226 aa). UDP-N-acetyl-alpha-D-glucosamine is bound by residues 8–11, lysine 22, glutamine 73, 78–79, 99–101, glycine 136, glutamate 151, asparagine 166, and asparagine 224; these read LAAG, GT, and YGD. A Mg(2+)-binding site is contributed by aspartate 101. Residue asparagine 224 coordinates Mg(2+). Residues 227-247 form a linker region; that stretch reads TQLASLERVWQRNVAEKIMAK. The tract at residues 248–455 is N-acetyltransferase; sequence GVSIADPNRF…WQRPVKKTDK (208 aa). Arginine 330 and lysine 348 together coordinate UDP-N-acetyl-alpha-D-glucosamine. The active-site Proton acceptor is histidine 360. 2 residues coordinate UDP-N-acetyl-alpha-D-glucosamine: tyrosine 363 and asparagine 374. Residues alanine 377, 383 to 384, serine 402, alanine 420, and arginine 437 contribute to the acetyl-CoA site; that span reads NY.

The protein in the N-terminal section; belongs to the N-acetylglucosamine-1-phosphate uridyltransferase family. This sequence in the C-terminal section; belongs to the transferase hexapeptide repeat family. Homotrimer. Requires Mg(2+) as cofactor.

Its subcellular location is the cytoplasm. The enzyme catalyses alpha-D-glucosamine 1-phosphate + acetyl-CoA = N-acetyl-alpha-D-glucosamine 1-phosphate + CoA + H(+). The catalysed reaction is N-acetyl-alpha-D-glucosamine 1-phosphate + UTP + H(+) = UDP-N-acetyl-alpha-D-glucosamine + diphosphate. It participates in nucleotide-sugar biosynthesis; UDP-N-acetyl-alpha-D-glucosamine biosynthesis; N-acetyl-alpha-D-glucosamine 1-phosphate from alpha-D-glucosamine 6-phosphate (route II): step 2/2. The protein operates within nucleotide-sugar biosynthesis; UDP-N-acetyl-alpha-D-glucosamine biosynthesis; UDP-N-acetyl-alpha-D-glucosamine from N-acetyl-alpha-D-glucosamine 1-phosphate: step 1/1. Its pathway is bacterial outer membrane biogenesis; LPS lipid A biosynthesis. Catalyzes the last two sequential reactions in the de novo biosynthetic pathway for UDP-N-acetylglucosamine (UDP-GlcNAc). The C-terminal domain catalyzes the transfer of acetyl group from acetyl coenzyme A to glucosamine-1-phosphate (GlcN-1-P) to produce N-acetylglucosamine-1-phosphate (GlcNAc-1-P), which is converted into UDP-GlcNAc by the transfer of uridine 5-monophosphate (from uridine 5-triphosphate), a reaction catalyzed by the N-terminal domain. This Francisella tularensis subsp. novicida (strain U112) protein is Bifunctional protein GlmU.